Consider the following 502-residue polypeptide: Premnaspirodiene oxygenase (502 aa).

The helical transmembrane segment at 2–22 threads the bilayer; that stretch reads QFFSLVSIFLFLSFLFLLRKW. A heme-binding site is contributed by C440.

It belongs to the cytochrome P450 family. It depends on heme as a cofactor.

It localises to the membrane. It catalyses the reaction (-)-vetispiradiene + 2 reduced [NADPH--hemoprotein reductase] + 2 O2 = solavetivone + 2 oxidized [NADPH--hemoprotein reductase] + 3 H2O + 2 H(+). Its function is as follows. Involved in the biosynthesis of solavetivone, a potent antifungal phytoalexin. Catalyzes the successive and independent hydroxylations of premnaspirodiene and solavetivol. The first hydroxylation step is 3-fold more efficient than the second hydroxylation reaction. This chain is Premnaspirodiene oxygenase (CYP71D55), found in Hyoscyamus muticus (Egyptian henbane).